A 212-amino-acid chain; its full sequence is Phosphatidylserine decarboxylase proenzyme (212 aa).

Ser-182 (schiff-base intermediate with substrate; via pyruvic acid) is an active-site residue. Ser-182 carries the post-translational modification Pyruvic acid (Ser); by autocatalysis.

Belongs to the phosphatidylserine decarboxylase family. PSD-A subfamily. In terms of assembly, heterodimer of a large membrane-associated beta subunit and a small pyruvoyl-containing alpha subunit. Requires pyruvate as cofactor. In terms of processing, is synthesized initially as an inactive proenzyme. Formation of the active enzyme involves a self-maturation process in which the active site pyruvoyl group is generated from an internal serine residue via an autocatalytic post-translational modification. Two non-identical subunits are generated from the proenzyme in this reaction, and the pyruvate is formed at the N-terminus of the alpha chain, which is derived from the carboxyl end of the proenzyme. The post-translation cleavage follows an unusual pathway, termed non-hydrolytic serinolysis, in which the side chain hydroxyl group of the serine supplies its oxygen atom to form the C-terminus of the beta chain, while the remainder of the serine residue undergoes an oxidative deamination to produce ammonia and the pyruvoyl prosthetic group on the alpha chain.

The protein localises to the cell membrane. The catalysed reaction is a 1,2-diacyl-sn-glycero-3-phospho-L-serine + H(+) = a 1,2-diacyl-sn-glycero-3-phosphoethanolamine + CO2. Its pathway is phospholipid metabolism; phosphatidylethanolamine biosynthesis; phosphatidylethanolamine from CDP-diacylglycerol: step 2/2. Its function is as follows. Catalyzes the formation of phosphatidylethanolamine (PtdEtn) from phosphatidylserine (PtdSer). The polypeptide is Phosphatidylserine decarboxylase proenzyme (Paraburkholderia phymatum (strain DSM 17167 / CIP 108236 / LMG 21445 / STM815) (Burkholderia phymatum)).